The primary structure comprises 217 residues: Acyl-homoserine-lactone synthase (217 aa).

Belongs to the autoinducer synthase family.

The catalysed reaction is a fatty acyl-[ACP] + S-adenosyl-L-methionine = an N-acyl-L-homoserine lactone + S-methyl-5'-thioadenosine + holo-[ACP] + H(+). Required for the synthesis of OHHL (N-(3-oxohexanoyl)-L-homoserine lactone), an autoinducer molecule which binds to ExpR and thus acts in virulence (soft rot disease) through the activation of genes for plant tissue macerating enzymes. In Pectobacterium parmentieri, this protein is Acyl-homoserine-lactone synthase (expI).